The primary structure comprises 132 residues: Replication enhancer protein (132 aa).

This sequence belongs to the geminiviridae replication enhancer protein family. In terms of assembly, homooligomer. Interacts with the replication-associated protein (REP). Interacts with host proliferating cell nuclear antigen (PCNA). Interacts with host retinoblastoma-related protein 1 (RBR1), and may thereby deregulate the host cell cycle. Oligomerization and interaction with PCNA are necessary for optimal replication enhancement.

Functionally, increases viral DNA accumulation. Enhances infectivity and symptom expression. This chain is Replication enhancer protein, found in Macroptilium lathyroides (Lima bean).